The primary structure comprises 76 residues: Acyl carrier protein (76 aa).

In terms of domain architecture, Carrier spans 1 to 76; the sequence is MSVEEKVKKI…DAIDYIAGKQ (76 aa). Serine 36 bears the O-(pantetheine 4'-phosphoryl)serine mark.

This sequence belongs to the acyl carrier protein (ACP) family. Post-translationally, 4'-phosphopantetheine is transferred from CoA to a specific serine of apo-ACP by AcpS. This modification is essential for activity because fatty acids are bound in thioester linkage to the sulfhydryl of the prosthetic group.

Its subcellular location is the cytoplasm. The protein operates within lipid metabolism; fatty acid biosynthesis. Functionally, carrier of the growing fatty acid chain in fatty acid biosynthesis. This chain is Acyl carrier protein, found in Oleidesulfovibrio alaskensis (strain ATCC BAA-1058 / DSM 17464 / G20) (Desulfovibrio alaskensis).